The following is a 392-amino-acid chain: ATP phosphoribosyltransferase regulatory subunit (392 aa).

It belongs to the class-II aminoacyl-tRNA synthetase family. HisZ subfamily. Heteromultimer composed of HisG and HisZ subunits.

The protein localises to the cytoplasm. The protein operates within amino-acid biosynthesis; L-histidine biosynthesis; L-histidine from 5-phospho-alpha-D-ribose 1-diphosphate: step 1/9. In terms of biological role, required for the first step of histidine biosynthesis. May allow the feedback regulation of ATP phosphoribosyltransferase activity by histidine. The sequence is that of ATP phosphoribosyltransferase regulatory subunit from Listeria monocytogenes serotype 4b (strain F2365).